A 292-amino-acid chain; its full sequence is ATP synthase gamma chain (292 aa).

This sequence belongs to the ATPase gamma chain family. In terms of assembly, F-type ATPases have 2 components, CF(1) - the catalytic core - and CF(0) - the membrane proton channel. CF(1) has five subunits: alpha(3), beta(3), gamma(1), delta(1), epsilon(1). CF(0) has three main subunits: a, b and c.

It localises to the cell inner membrane. In terms of biological role, produces ATP from ADP in the presence of a proton gradient across the membrane. The gamma chain is believed to be important in regulating ATPase activity and the flow of protons through the CF(0) complex. The polypeptide is ATP synthase gamma chain (Brucella canis (strain ATCC 23365 / NCTC 10854 / RM-666)).